We begin with the raw amino-acid sequence, 197 residues long: Na(+)-translocating NADH-quinone reductase subunit E (197 aa).

A run of 6 helical transmembrane segments spans residues 11–31, 35–55, 76–96, 108–128, 139–159, and 175–195; these read SVFI…FLAV, VSTA…SVPA, FLKF…LEMF, LGIY…VSFM, VVYG…LAGI, and LGIT…FSGI.

This sequence belongs to the NqrDE/RnfAE family. Composed of six subunits; NqrA, NqrB, NqrC, NqrD, NqrE and NqrF.

It is found in the cell inner membrane. It catalyses the reaction a ubiquinone + n Na(+)(in) + NADH + H(+) = a ubiquinol + n Na(+)(out) + NAD(+). Functionally, NQR complex catalyzes the reduction of ubiquinone-1 to ubiquinol by two successive reactions, coupled with the transport of Na(+) ions from the cytoplasm to the periplasm. NqrA to NqrE are probably involved in the second step, the conversion of ubisemiquinone to ubiquinol. In Neisseria gonorrhoeae (strain ATCC 700825 / FA 1090), this protein is Na(+)-translocating NADH-quinone reductase subunit E.